Consider the following 249-residue polypeptide: Meiotic drive suppressor wtf25 (249 aa).

Residues 1–40 (MKNNYTSLKSPLDEEDELKTDHEIDLEKGPLPEYDSEEEG) form a disordered region. Positions 19–30 (KTDHEIDLEKGP) are enriched in basic and acidic residues. Transmembrane regions (helical) follow at residues 73–93 (LLII…PAFC), 110–130 (WTLF…LTYF), 151–170 (NMIF…LKAE), and 187–207 (SASA…AETV).

It belongs to the WTF family. As to quaternary structure, homomer. Interacts with other proteins that exhibit high sequence similarity.

The protein resides in the spore membrane. It localises to the vacuole membrane. Its function is as follows. Acts as a suppressor component of the dual wtf meiotic drive system, and can suppress but not confer meiotic drive by compatible poisons. Wtf meiotic drive systems promote unequal transmission of alleles from the parental zygote to progeny spores by encoding a poison and an antidote from the same locus; the poison is trans-acting and forms toxic aggregates in all spores within an ascus, wherease the antidote is spore-specific and targets aggregates for degradation by the vacuole. Meiotic drive by wtf systems therefore lead to poisoning of all progeny that do not inherit the dual poison/antidote allele, or express a compatible antidote. This is Meiotic drive suppressor wtf25 from Schizosaccharomyces pombe (strain 972 / ATCC 24843) (Fission yeast).